We begin with the raw amino-acid sequence, 369 residues long: Pulmonary surfactant-associated protein D (369 aa).

Positions 1 to 20 are cleaved as a signal peptide; that stretch reads MLLLPLSVLLLLTQPWRSLG. S-nitrosocysteine occurs at positions 35 and 40. Residues 41–215 are disordered; it reads SPPEDGLPGR…ERGAKGESGL (175 aa). The Collagen-like domain maps to 46 to 216; the sequence is GLPGRDGRDG…RGAKGESGLA (171 aa). Over residues 47-65 the composition is skewed to basic and acidic residues; it reads LPGRDGRDGREGPRGEKGD. Position 78 is a 4-hydroxyproline (P78). Position 87 is a 5-hydroxylysine (K87). N-linked (GlcNAc...) asparagine glycosylation occurs at N90. A 4-hydroxyproline modification is found at P96. K99 is modified (5-hydroxylysine). Gly residues predominate over residues 139–148; the sequence is GPKGGVGAPG. A 4-hydroxyproline mark is found at P165 and P171. The span at 165-191 shows a compositional bias: low complexity; it reads PGEPGAPGRAGAPGPAGAIGPQGPSGA. Residues 198-210 show a composition bias toward basic and acidic residues; the sequence is KGDRGTPGERGAK. Positions 217–248 form a coiled coil; that stretch reads EVNALRQRVGILEGQLQRLQNAFSQYKKAMLF. Residues 254–369 form the C-type lectin domain; sequence VGEKIFKTEG…GEQRLVICEF (116 aa). 2 disulfide bridges follow: C275–C367 and C345–C359.

It belongs to the SFTPD family. Oligomeric complex of 4 set of homotrimers. Hydroxylation on proline residues within the sequence motif, GXPG, is most likely to be 4-hydroxy as this fits the requirement for 4-hydroxylation in vertebrates. Post-translationally, S-nitrosylation at Cys-35 and Cys-40 alters the quaternary structure which results in a pro-inflammatory chemoattractive signaling activity with macrophages.

Its subcellular location is the secreted. It is found in the extracellular space. The protein localises to the extracellular matrix. The protein resides in the surface film. In terms of biological role, contributes to the lung's defense against inhaled microorganisms, organic antigens and toxins. Interacts with compounds such as bacterial lipopolysaccharides, oligosaccharides and fatty acids and modulates leukocyte action in immune response. May participate in the extracellular reorganization or turnover of pulmonary surfactant. Binds strongly maltose residues and to a lesser extent other alpha-glucosyl moieties. The protein is Pulmonary surfactant-associated protein D (SFTPD) of Bos taurus (Bovine).